Consider the following 929-residue polypeptide: Probable LRR receptor-like serine/threonine-protein kinase At1g67720 (929 aa).

A signal peptide spans 1–21 (MGLCLAQLAVTCLFLVPFVLS). Topologically, residues 22–531 (QVTEFVSIDC…NEAQRKHFWQ (510 aa)) are extracellular. N-linked (GlcNAc...) asparagine glycans are attached at residues Asn-36, Asn-173, Asn-236, Asn-293, Asn-320, Asn-332, and Asn-407. LRR repeat units follow at residues 413–437 (PPRVTKIALSRKNLRGEIPPGINYM), 438–460 (EALTELWLDDNELTGTLPDMSKL), 461–484 (VNLKIMHLENNQLSGSLPPYLAHL), and 485–508 (PNLQELSIENNSFKGKIPSALLKG). A glycan (N-linked (GlcNAc...) asparagine) is linked at Asn-494. A helical transmembrane segment spans residues 532–552 (ILGISIAAVAILLLLVGGSLV). Residues 553–929 (LLCALRKTKR…SRNSLAPAAR (377 aa)) are Cytoplasmic-facing. The 275-residue stretch at 606 to 880 (DNFSKKVGRG…EVIVAIQDAI (275 aa)) folds into the Protein kinase domain. Residues 612–620 (VGRGSFGSV) and Lys-634 each bind ATP. A Phosphotyrosine modification is found at Tyr-679. Residue Asp-731 is the Proton acceptor of the active site. Phosphoserine is present on residues Ser-735 and Ser-764. Thr-770 is subject to Phosphothreonine. Position 778 is a phosphotyrosine (Tyr-778).

This sequence belongs to the protein kinase superfamily. Ser/Thr protein kinase family.

It localises to the membrane. It catalyses the reaction L-seryl-[protein] + ATP = O-phospho-L-seryl-[protein] + ADP + H(+). The enzyme catalyses L-threonyl-[protein] + ATP = O-phospho-L-threonyl-[protein] + ADP + H(+). The polypeptide is Probable LRR receptor-like serine/threonine-protein kinase At1g67720 (Arabidopsis thaliana (Mouse-ear cress)).